The primary structure comprises 1642 residues: Coiled-coil domain-containing protein 7A (1642 aa).

The segment at 21 to 51 is disordered; it reads PYKKGLLNSSPKPKEKHNAKSKYGKNESMVL. The LRR 1 repeat unit spans residues 161-184; that stretch reads VNQMEEISKDQSNLEELQSDGKTA. A coiled-coil region spans residues 279–330; it reads LEKALNDQQTIESKYKQLETDFQMLIMEKTLLEAEIRRLREIERVKSAAKEE. The LRR 2 repeat unit spans residues 1310 to 1333; that stretch reads IKELSKTLNLDGGDIELSDFVFKT.

In terms of tissue distribution, exclusively expressed in the testes.

This is Coiled-coil domain-containing protein 7A from Mus musculus (Mouse).